The following is a 337-amino-acid chain: Monoacylglycerol lipase ABHD6 (337 aa).

The Extracellular segment spans residues 1-8; sequence MDLDVVNM. The helical; Signal-anchor for type II membrane protein transmembrane segment at 9–29 threads the bilayer; that stretch reads FVIAGGTLAIPILAFVASFLL. At 30 to 337 the chain is on the cytoplasmic side; it reads WPSALIRIYY…HNTDNNKKLD (308 aa). Residues 72–313 form the AB hydrolase-1 domain; sequence PSILMLHGFS…CGHSVVMERP (242 aa). Phe-80 contacts (9Z)-octadecenoate. The Nucleophile role is filled by Ser-148. Met-149 provides a ligand contact to (9Z)-octadecenoate. Active-site charge relay system residues include Asp-278 and His-306. (9Z)-octadecenoate is bound at residue His-306.

Belongs to the AB hydrolase superfamily.

It localises to the late endosome membrane. Its subcellular location is the lysosome membrane. It is found in the mitochondrion membrane. The enzyme catalyses Hydrolyzes glycerol monoesters of long-chain fatty acids.. The catalysed reaction is 1-octanoylglycerol + H2O = octanoate + glycerol + H(+). It carries out the reaction 1-decanoylglycerol + H2O = decanoate + glycerol + H(+). It catalyses the reaction 1-dodecanoylglycerol + H2O = dodecanoate + glycerol + H(+). The enzyme catalyses 1-tetradecanoylglycerol + H2O = tetradecanoate + glycerol + H(+). The catalysed reaction is 2-hexadecanoylglycerol + H2O = glycerol + hexadecanoate + H(+). It carries out the reaction 2-(9Z-octadecenoyl)-glycerol + H2O = glycerol + (9Z)-octadecenoate + H(+). It catalyses the reaction 1-(9Z-octadecenoyl)-glycerol + H2O = glycerol + (9Z)-octadecenoate + H(+). The enzyme catalyses 2-(9Z,12Z-octadecadienoyl)-glycerol + H2O = (9Z,12Z)-octadecadienoate + glycerol + H(+). The catalysed reaction is 2-(5Z,8Z,11Z,14Z-eicosatetraenoyl)-glycerol + H2O = glycerol + (5Z,8Z,11Z,14Z)-eicosatetraenoate + H(+). It carries out the reaction 1-(5Z,8Z,11Z,14Z-eicosatetraenoyl)-glycerol + H2O = glycerol + (5Z,8Z,11Z,14Z)-eicosatetraenoate + H(+). It catalyses the reaction 1-(9Z,12Z-octadecadienoyl)-glycerol + H2O = (9Z,12Z)-octadecadienoate + glycerol + H(+). The enzyme catalyses 3-(9Z-octadecenoyl)-sn-glycero-1-phospho-(3'-(9Z-octadecenoyl)-1'-sn-glycerol) + H2O = 3-(9Z-octadecenoyl)-sn-glycero-1-phospho-(1'-sn-glycerol) + (9Z)-octadecenoate + H(+). The catalysed reaction is (S,S)-2-(9Z-octadecenoyl)-sn-glycero-1-phospho-(2'-(9Z-octadecenoyl)-1'-sn-glycerol) + H2O = (S,S)-2-(9Z-octadecenoyl)-sn-glycero-1-phospho-(1'-sn-glycerol) + (9Z)-octadecenoate + H(+). It carries out the reaction (R,R)-2-(9Z-octadecenoyl)-sn-glycero-3-phospho-(2'-(9Z-octadecenoyl)-3'-sn-glycerol) + H2O = (R,R)-2-(9Z-octadecenoyl)-sn-glycero-3-phospho-(3'-sn-glycerol) + (9Z)-octadecenoate + H(+). Functionally, lipase that preferentially hydrolysis medium-chain saturated monoacylglycerols including 2-arachidonoylglycerol. Through 2-arachidonoylglycerol degradation may regulate endocannabinoid signaling pathways. Also has a lysophosphatidyl lipase activity with a preference for lysophosphatidylglycerol among other lysophospholipids. Also able to degrade bis(monoacylglycero)phosphate (BMP) and constitutes the major enzyme for BMP catabolism. BMP, also known as lysobisphosphatidic acid, is enriched in late endosomes and lysosomes and plays a key role in the formation of intraluminal vesicles and in lipid sorting. This chain is Monoacylglycerol lipase ABHD6, found in Homo sapiens (Human).